Consider the following 962-residue polypeptide: Activity-dependent neuroprotective protein 2a (962 aa).

The C2H2-type 1 zinc-finger motif lies at 75–98 (LCCSLCWYSSRSVPTFRSHIHRCH). The C2H2-type 2; degenerate zinc finger occupies 108–130 (LMCPYCPFVSSPKVTEQHIQFFH). The C2H2-type 3; degenerate zinc finger occupies 165–188 (YTCATCGYHDSLLYVMKKHVLVNH). The C2H2-type 4 zinc finger occupies 219–244 (YHCKLCKLPAETIEHLLYHILSSEKH). A C2H2-type 5; degenerate zinc finger spans residues 527-547 (VKCLRCKILLTEQGIFQHLLH). 2 C2H2-type zinc fingers span residues 549–572 (LKCL…KKEH) and 650–673 (NACP…QTKH). The C2H2-type 8; degenerate zinc finger occupies 688-712 (YKCIYCFGVYTEKSTPKTISIHVQR). Positions 753–781 (QGAPEFPKPKKEAVTPRNRRRNTKASKTG) are disordered. Positions 795 to 854 (PMGMERTSFEDRKDFLSQYFHRKPYVTKTEIELLASRLWINKADVKAHFNSKLTKCLKAI) form a DNA-binding region, homeobox.

The protein resides in the nucleus. Functionally, may be involved in transcriptional regulation. Required for progression through late erythroid differentiation. May be involved in vasculogenesis. In Danio rerio (Zebrafish), this protein is Activity-dependent neuroprotective protein 2a.